The primary structure comprises 404 residues: MSCTRGWRLILLGLLCVGLLGTRGQDESRKVSVQYNPGSSDTSVNVVHVRAVGDGNTIHYVWSTLGTPTVLLIYTHSETSQLQVNWTKLLSPAPQGALRVEPEESVSYATALLFTRIFEYQDVNNTANFSGTDEKYFYPPYNLSEFLWENANATVNATSLSANLTGSNTTDPSGSFHNGSVSFRISAYNTSGRDSSPPRLRHTANCTKLEFLVSGVRPRGNNSRFALEMVTIEKEGRRKMKSVLSIDDEYTPTIFEMMQLVAVAPNSSHARGFLQWKSVAYGSPSGSRADLLPCQLYPLQPLNATFTATSIAHAYFGDDLADAYNLEAFNISFGIADGDFYDKHEFLSWSALIGYGDPPRDSFSILVICIMAVALGTPLLLLIIGTVLVTAVRHKVYPNYQPIN.

The N-terminal stretch at 1–24 is a signal peptide; sequence MSCTRGWRLILLGLLCVGLLGTRG. The Lumenal portion of the chain corresponds to 25-364; sequence QDESRKVSVQ…YGDPPRDSFS (340 aa). 15 N-linked (GlcNAc...) asparagine glycosylation sites follow: asparagine 85, asparagine 124, asparagine 128, asparagine 142, asparagine 152, asparagine 156, asparagine 163, asparagine 168, asparagine 178, asparagine 189, asparagine 205, asparagine 221, asparagine 266, asparagine 303, and asparagine 330. A helical membrane pass occupies residues 365–385; it reads ILVICIMAVALGTPLLLLIIG. Residues 386–404 are Cytoplasmic-facing; the sequence is TVLVTAVRHKVYPNYQPIN. Residues 400–404 carry the Lysosomal targeting motif motif; sequence YQPIN.

It belongs to the GLMP family. Interacts (via lumenal domain) with lysosomal protein MFSD1; the interaction starts while both proteins are still in the endoplasmic reticulum and is required for stabilization of MFSD1 in lysosomes but has no direct effect on its targeting to lysosomes or transporter activity.

Its subcellular location is the lysosome membrane. In terms of biological role, required to protect lysosomal transporter MFSD1 from lysosomal proteolysis and for MFSD1 lysosomal localization. The polypeptide is Glycosylated lysosomal membrane protein B (glmp-b) (Xenopus laevis (African clawed frog)).